A 150-amino-acid chain; its full sequence is Cytochrome c oxidase subunit 5A, mitochondrial (150 aa).

Residues 1 to 41 (MLGAALRRCAVAAAARAGPRGLLHSAPTPGPAAAIQSVRCY) constitute a mitochondrion transit peptide. Residues 2-17 (LGAALRRCAVAAAARA) carry the SIFI-degron motif. 2 positions are modified to N6-acetyllysine: Lys-87 and Lys-113. Thr-141 is subject to Phosphothreonine.

This sequence belongs to the cytochrome c oxidase subunit 5A family. In terms of assembly, component of the cytochrome c oxidase (complex IV, CIV), a multisubunit enzyme composed of 14 subunits. The complex is composed of a catalytic core of 3 subunits MT-CO1, MT-CO2 and MT-CO3, encoded in the mitochondrial DNA, and 11 supernumerary subunits COX4I, COX5A, COX5B, COX6A, COX6B, COX6C, COX7A, COX7B, COX7C, COX8 and NDUFA4, which are encoded in the nuclear genome. The complex exists as a monomer or a dimer and forms supercomplexes (SCs) in the inner mitochondrial membrane with NADH-ubiquinone oxidoreductase (complex I, CI) and ubiquinol-cytochrome c oxidoreductase (cytochrome b-c1 complex, complex III, CIII), resulting in different assemblies (supercomplex SCI(1)III(2)IV(1) and megacomplex MCI(2)III(2)IV(2)). Interacts with AFG1L. Interacts with RAB5IF. In response to mitochondrial stress, the precursor protein is ubiquitinated by the SIFI complex in the cytoplasm before mitochondrial import, leading to its degradation. Within the SIFI complex, UBR4 initiates ubiquitin chain that are further elongated or branched by KCMF1.

It is found in the mitochondrion inner membrane. It functions in the pathway energy metabolism; oxidative phosphorylation. In terms of biological role, component of the cytochrome c oxidase, the last enzyme in the mitochondrial electron transport chain which drives oxidative phosphorylation. The respiratory chain contains 3 multisubunit complexes succinate dehydrogenase (complex II, CII), ubiquinol-cytochrome c oxidoreductase (cytochrome b-c1 complex, complex III, CIII) and cytochrome c oxidase (complex IV, CIV), that cooperate to transfer electrons derived from NADH and succinate to molecular oxygen, creating an electrochemical gradient over the inner membrane that drives transmembrane transport and the ATP synthase. Cytochrome c oxidase is the component of the respiratory chain that catalyzes the reduction of oxygen to water. Electrons originating from reduced cytochrome c in the intermembrane space (IMS) are transferred via the dinuclear copper A center (CU(A)) of subunit 2 and heme A of subunit 1 to the active site in subunit 1, a binuclear center (BNC) formed by heme A3 and copper B (CU(B)). The BNC reduces molecular oxygen to 2 water molecules using 4 electrons from cytochrome c in the IMS and 4 protons from the mitochondrial matrix. This Plecturocebus donacophilus (Bolivian gray titi monkey) protein is Cytochrome c oxidase subunit 5A, mitochondrial (COX5A).